Consider the following 249-residue polypeptide: Metal-staphylopine import system ATP-binding protein CntF (249 aa).

An ABC transporter domain is found at 2 to 244; sequence IKIKDVEKSY…DNAYTRELIE (243 aa). 42–49 contributes to the ATP binding site; the sequence is GESGSGKS.

The protein belongs to the ABC transporter superfamily. As to quaternary structure, the complex is composed of two ATP-binding proteins (CntD and CntF), two transmembrane proteins (CntB and CntC) and a solute-binding protein (CntA).

The protein resides in the cell membrane. Nickel/cobalt import is reduced in the presence of zinc. Its function is as follows. Part of the ABC transporter complex CntABCDF (Opp1) involved in the uptake of metal in complex with the metallophore staphylopine (StP). Involved in the import of divalent metals ions such as nickel, cobalt and zinc. Probably responsible for energy coupling to the transport system. Plays a major role in nickel/cobalt import in zinc-depleted conditions. Contributes to virulence. Required for full urease activity in vitro. The sequence is that of Metal-staphylopine import system ATP-binding protein CntF from Staphylococcus aureus (strain NCTC 8325 / PS 47).